The chain runs to 347 residues: Biotin synthase (347 aa).

One can recognise a Radical SAM core domain in the interval 40–258 (AQVQVSTLLS…IAVARIAMPR (219 aa)). [4Fe-4S] cluster contacts are provided by C55, C59, and C62. 4 residues coordinate [2Fe-2S] cluster: C99, C130, C190, and R262.

This sequence belongs to the radical SAM superfamily. Biotin synthase family. Homodimer. [4Fe-4S] cluster is required as a cofactor. The cofactor is [2Fe-2S] cluster.

It carries out the reaction (4R,5S)-dethiobiotin + (sulfur carrier)-SH + 2 reduced [2Fe-2S]-[ferredoxin] + 2 S-adenosyl-L-methionine = (sulfur carrier)-H + biotin + 2 5'-deoxyadenosine + 2 L-methionine + 2 oxidized [2Fe-2S]-[ferredoxin]. It participates in cofactor biosynthesis; biotin biosynthesis; biotin from 7,8-diaminononanoate: step 2/2. Functionally, catalyzes the conversion of dethiobiotin (DTB) to biotin by the insertion of a sulfur atom into dethiobiotin via a radical-based mechanism. This chain is Biotin synthase, found in Stenotrophomonas maltophilia (strain K279a).